A 517-amino-acid polypeptide reads, in one-letter code: NADH-quinone oxidoreductase subunit N (517 aa).

Transmembrane regions (helical) follow at residues 14–34 (LAPT…EAFV), 40–60 (HMVQ…MVVV), 77–97 (GPAL…LLLI), 131–151 (ATEV…FVAA), 154–174 (LLTM…LCAL), 189–209 (YFLL…LVYG), 238–258 (VLLF…AAAA), 272–292 (PTPI…GALL), 306–326 (FTPI…VLAV), 334–354 (LLAY…LAPS), 362–382 (MFYL…VTLV), 404–424 (FYAG…LTSG), 451–471 (SMVL…SEPG), and 481–501 (GWLT…LGVV).

The protein belongs to the complex I subunit 2 family. In terms of assembly, NDH-1 is composed of 14 different subunits. Subunits NuoA, H, J, K, L, M, N constitute the membrane sector of the complex.

It localises to the cell membrane. The catalysed reaction is a quinone + NADH + 5 H(+)(in) = a quinol + NAD(+) + 4 H(+)(out). In terms of biological role, NDH-1 shuttles electrons from NADH, via FMN and iron-sulfur (Fe-S) centers, to quinones in the respiratory chain. The immediate electron acceptor for the enzyme in this species is believed to be a menaquinone. Couples the redox reaction to proton translocation (for every two electrons transferred, four hydrogen ions are translocated across the cytoplasmic membrane), and thus conserves the redox energy in a proton gradient. The polypeptide is NADH-quinone oxidoreductase subunit N (Salinispora arenicola (strain CNS-205)).